Here is a 525-residue protein sequence, read N- to C-terminus: GMP synthase [glutamine-hydrolyzing] (525 aa).

The 199-residue stretch at 9 to 207 (RILILDFGSQ…VRDICQCEAL (199 aa)) folds into the Glutamine amidotransferase type-1 domain. Catalysis depends on C86, which acts as the Nucleophile. Residues H181 and E183 contribute to the active site. Residues 208 to 400 (WTPAKIIDDA…LGLPYNMLYR (193 aa)) enclose the GMPS ATP-PPase domain. 235-241 (SGGVDSS) lines the ATP pocket.

In terms of assembly, homodimer.

It carries out the reaction XMP + L-glutamine + ATP + H2O = GMP + L-glutamate + AMP + diphosphate + 2 H(+). It participates in purine metabolism; GMP biosynthesis; GMP from XMP (L-Gln route): step 1/1. Catalyzes the synthesis of GMP from XMP. In Pectobacterium carotovorum subsp. carotovorum (strain PC1), this protein is GMP synthase [glutamine-hydrolyzing].